The primary structure comprises 307 residues: Lipoyl synthase (307 aa).

7 residues coordinate [4Fe-4S] cluster: C55, C60, C66, C81, C85, C88, and S292. One can recognise a Radical SAM core domain in the interval 67–281; the sequence is WEDREATFLI…ARHAEELGFS (215 aa).

The protein belongs to the radical SAM superfamily. Lipoyl synthase family. The cofactor is [4Fe-4S] cluster.

It is found in the cytoplasm. It carries out the reaction [[Fe-S] cluster scaffold protein carrying a second [4Fe-4S](2+) cluster] + N(6)-octanoyl-L-lysyl-[protein] + 2 oxidized [2Fe-2S]-[ferredoxin] + 2 S-adenosyl-L-methionine + 4 H(+) = [[Fe-S] cluster scaffold protein] + N(6)-[(R)-dihydrolipoyl]-L-lysyl-[protein] + 4 Fe(3+) + 2 hydrogen sulfide + 2 5'-deoxyadenosine + 2 L-methionine + 2 reduced [2Fe-2S]-[ferredoxin]. The protein operates within protein modification; protein lipoylation via endogenous pathway; protein N(6)-(lipoyl)lysine from octanoyl-[acyl-carrier-protein]: step 2/2. Functionally, catalyzes the radical-mediated insertion of two sulfur atoms into the C-6 and C-8 positions of the octanoyl moiety bound to the lipoyl domains of lipoate-dependent enzymes, thereby converting the octanoylated domains into lipoylated derivatives. The protein is Lipoyl synthase of Mycobacterium avium (strain 104).